Reading from the N-terminus, the 299-residue chain is Trimeric intracellular cation channel type A (299 aa).

Topologically, residues 1–18 (MELLSALSLGELALSFSR) are lumenal. The helical transmembrane segment at 19–39 (VPLFPVFDLSYFIVSILYLKY) threads the bilayer. Over 40 to 51 (EPGAVELSRRHP) the chain is Cytoplasmic. The chain crosses the membrane as a helical span at residues 52–72 (IASWLCAMLHCFGSYILADLL). Residues 73 to 85 (LGEPLIDYFSNNS) are Lumenal-facing. Position 74 (Gly-74) interacts with Ca(2+). A helical transmembrane segment spans residues 86-106 (SILLASAVWYLIFFCPLDLFY). The Cytoplasmic segment spans residues 107–144 (KCVCFLPVKLIFVAMKEVVRVRKIAVGIHHAHHHYHHG). A 1,2-diacyl-sn-glycero-3-phospho-(1D-myo-inositol-4,5-bisphosphate)-binding residues include Lys-122 and Arg-126. A helical transmembrane segment spans residues 145-165 (WFVMIATGWVKGSGVALMSNF). The Lumenal portion of the chain corresponds to 166–178 (EQLLRGVWKPETN). A helical membrane pass occupies residues 179–199 (EILHMSFPTKASLYGAILFTL). The Cytoplasmic portion of the chain corresponds to 200–209 (QQTRWLPVSK). Residues 210 to 230 (ASLIFIFTLFMVSCKVFLTAT) form a helical membrane-spanning segment. The Lumenal segment spans residues 231–234 (HSHS). The chain crosses the membrane as a helical span at residues 235–255 (SPFDALEGYICPVLFGSACGG). The Cytoplasmic segment spans residues 256-299 (DHHHDNHGGSHSGGGPGAQHSAMPAKSKEELSEGSRKKKAKKAD). The tract at residues 260–299 (DNHGGSHSGGGPGAQHSAMPAKSKEELSEGSRKKKAKKAD) is disordered. The segment covering 281-290 (KSKEELSEGS) has biased composition (basic and acidic residues).

It belongs to the TMEM38 family. As to quaternary structure, homotrimer; conformation seems to be controled by binding to diacylglycerol (DAG).

The protein localises to the sarcoplasmic reticulum membrane. Its subcellular location is the nucleus membrane. The enzyme catalyses K(+)(in) = K(+)(out). Its activity is regulated as follows. Channel activity is activated by a change of voltage within the sarcoplasmic reticulum lumen and blocked by luminal high Ca(2+) levels. Its function is as follows. Intracellular monovalent cation channel required for maintenance of rapid intracellular calcium release. Acts as a potassium counter-ion channel that functions in synchronization with calcium release from intracellular stores. Opened by a change of voltage within the sarcoplasmic reticulum lumen. The chain is Trimeric intracellular cation channel type A from Homo sapiens (Human).